Consider the following 318-residue polypeptide: Peptidyl-prolyl cis-trans isomerase CPR4 (318 aa).

A signal peptide spans Met1 to Ala20. Residues Tyr55–Leu225 enclose the PPIase cyclophilin-type domain. N-linked (GlcNAc...) asparagine glycosylation occurs at Asn166. A helical membrane pass occupies residues Ile286–Tyr303.

The protein resides in the membrane. It carries out the reaction [protein]-peptidylproline (omega=180) = [protein]-peptidylproline (omega=0). Its function is as follows. PPIases accelerate the folding of proteins. It catalyzes the cis-trans isomerization of proline imidic peptide bonds in oligopeptides. This is Peptidyl-prolyl cis-trans isomerase CPR4 (CPR4) from Saccharomyces cerevisiae (strain ATCC 204508 / S288c) (Baker's yeast).